The sequence spans 129 residues: Transcription antitermination protein NusB (129 aa).

This sequence belongs to the NusB family.

Its function is as follows. Involved in transcription antitermination. Required for transcription of ribosomal RNA (rRNA) genes. Binds specifically to the boxA antiterminator sequence of the ribosomal RNA (rrn) operons. The polypeptide is Transcription antitermination protein NusB (Staphylococcus aureus (strain bovine RF122 / ET3-1)).